The following is a 234-amino-acid chain: Peptidase E (234 aa).

Catalysis depends on charge relay system residues S123, D138, and H160.

The protein belongs to the peptidase S51 family.

It is found in the cytoplasm. The enzyme catalyses Dipeptidase E catalyzes the hydrolysis of dipeptides Asp-|-Xaa. It does not act on peptides with N-terminal Glu, Asn or Gln, nor does it cleave isoaspartyl peptides.. In terms of biological role, hydrolyzes dipeptides containing N-terminal aspartate residues. May play a role in allowing the cell to use peptide aspartate to spare carbon otherwise required for the synthesis of the aspartate family of amino acids. This is Peptidase E from Haemophilus influenzae (strain PittGG).